The following is an 86-amino-acid chain: UPF0386 protein RC1_1783 (86 aa).

Belongs to the UPF0386 family.

The protein is UPF0386 protein RC1_1783 of Rhodospirillum centenum (strain ATCC 51521 / SW).